The sequence spans 521 residues: Acidic amino acid decarboxylase GADL1 (521 aa).

Basic and acidic residues predominate over residues 1 to 12 (MSLLPDRERAPD). Positions 1–20 (MSLLPDRERAPDGDISPQEM) are disordered. Lysine 333 bears the N6-(pyridoxal phosphate)lysine mark.

Belongs to the group II decarboxylase family. In terms of assembly, homodimer. The cofactor is pyridoxal 5'-phosphate. As to expression, expressed at highest levels in skeletal muscles. Also detected heart, spleen and rumen.

It catalyses the reaction L-aspartate + H(+) = beta-alanine + CO2. The catalysed reaction is 3-sulfino-L-alanine + H(+) = hypotaurine + CO2. It carries out the reaction L-cysteate + H(+) = taurine + CO2. Catalyzes the decarboxylation of L-aspartate, 3-sulfino-L-alanine (cysteine sulfinic acid), and L-cysteate to beta-alanine, hypotaurine and taurine, respectively. The preferred substrate is L-aspartate. Does not exhibit any decarboxylation activity toward glutamate. The chain is Acidic amino acid decarboxylase GADL1 (GADL1) from Bos taurus (Bovine).